The following is a 360-amino-acid chain: UDP-N-acetylglucosamine--N-acetylmuramyl-(pentapeptide) pyrophosphoryl-undecaprenol N-acetylglucosamine transferase (360 aa).

Residues 15-17 (TGG), asparagine 127, arginine 163, serine 191, isoleucine 249, 268-273 (ALTVSE), and glutamine 293 contribute to the UDP-N-acetyl-alpha-D-glucosamine site.

This sequence belongs to the glycosyltransferase 28 family. MurG subfamily.

The protein localises to the cell inner membrane. The catalysed reaction is di-trans,octa-cis-undecaprenyl diphospho-N-acetyl-alpha-D-muramoyl-L-alanyl-D-glutamyl-meso-2,6-diaminopimeloyl-D-alanyl-D-alanine + UDP-N-acetyl-alpha-D-glucosamine = di-trans,octa-cis-undecaprenyl diphospho-[N-acetyl-alpha-D-glucosaminyl-(1-&gt;4)]-N-acetyl-alpha-D-muramoyl-L-alanyl-D-glutamyl-meso-2,6-diaminopimeloyl-D-alanyl-D-alanine + UDP + H(+). It participates in cell wall biogenesis; peptidoglycan biosynthesis. Its function is as follows. Cell wall formation. Catalyzes the transfer of a GlcNAc subunit on undecaprenyl-pyrophosphoryl-MurNAc-pentapeptide (lipid intermediate I) to form undecaprenyl-pyrophosphoryl-MurNAc-(pentapeptide)GlcNAc (lipid intermediate II). This is UDP-N-acetylglucosamine--N-acetylmuramyl-(pentapeptide) pyrophosphoryl-undecaprenol N-acetylglucosamine transferase from Proteus mirabilis (strain HI4320).